The primary structure comprises 376 residues: Phosphoserine aminotransferase (376 aa).

Residue Arg-54 coordinates L-glutamate. Residues 88 to 89 (AT), Trp-115, Thr-165, Asp-186, and Gln-209 contribute to the pyridoxal 5'-phosphate site. At Lys-210 the chain carries N6-(pyridoxal phosphate)lysine. 251–252 (NT) provides a ligand contact to pyridoxal 5'-phosphate.

This sequence belongs to the class-V pyridoxal-phosphate-dependent aminotransferase family. SerC subfamily. As to quaternary structure, homodimer. The cofactor is pyridoxal 5'-phosphate.

It is found in the cytoplasm. The catalysed reaction is O-phospho-L-serine + 2-oxoglutarate = 3-phosphooxypyruvate + L-glutamate. The enzyme catalyses 4-(phosphooxy)-L-threonine + 2-oxoglutarate = (R)-3-hydroxy-2-oxo-4-phosphooxybutanoate + L-glutamate. Its pathway is amino-acid biosynthesis; L-serine biosynthesis; L-serine from 3-phospho-D-glycerate: step 2/3. It participates in cofactor biosynthesis; pyridoxine 5'-phosphate biosynthesis; pyridoxine 5'-phosphate from D-erythrose 4-phosphate: step 3/5. In terms of biological role, catalyzes the reversible conversion of 3-phosphohydroxypyruvate to phosphoserine and of 3-hydroxy-2-oxo-4-phosphonooxybutanoate to phosphohydroxythreonine. This is Phosphoserine aminotransferase from Rhodopirellula baltica (strain DSM 10527 / NCIMB 13988 / SH1).